The primary structure comprises 343 residues: L-threonine 3-dehydrogenase (343 aa).

Residue Cys38 coordinates Zn(2+). Active-site charge relay system residues include Thr40 and His43. Positions 63, 64, 93, 96, 99, and 107 each coordinate Zn(2+). Residues Ile176, Asp196, Arg201, 261-263 (LGI), and 286-288 (IAG) each bind NAD(+).

It belongs to the zinc-containing alcohol dehydrogenase family. In terms of assembly, homotetramer. Zn(2+) serves as cofactor.

The protein resides in the cytoplasm. It carries out the reaction L-threonine + NAD(+) = (2S)-2-amino-3-oxobutanoate + NADH + H(+). The protein operates within amino-acid degradation; L-threonine degradation via oxydo-reductase pathway; glycine from L-threonine: step 1/2. In terms of biological role, catalyzes the NAD(+)-dependent oxidation of L-threonine to 2-amino-3-ketobutyrate. The sequence is that of L-threonine 3-dehydrogenase from Thermus thermophilus (strain ATCC 27634 / DSM 579 / HB8).